The primary structure comprises 124 residues: Small polypeptide ROTUNDIFOLIA LIKE 3 (124 aa).

The segment at 1–25 (MEDERWKLSSSKGRSKSGRSCSSSS) is disordered. Residues Asn35 and Asn38 are each glycosylated (N-linked (GlcNAc...) asparagine). A helical transmembrane segment spans residues 59–75 (AWSAAGAGGGGASSSSS). The disordered stretch occupies residues 60-95 (WSAAGAGGGGASSSSSSQHQHQQQQQQSNNSQRLSK). The span at 71–91 (SSSSSSQHQHQQQQQQSNNSQ) shows a compositional bias: low complexity. The N-linked (GlcNAc...) asparagine glycan is linked to Asn88. The required for DVL/RTFL small polypeptide activity stretch occupies residues 92–124 (RLSKKCVEAVKEHRARFYIVRRCVSMLVCWRDY).

The protein belongs to the DVL/RTFL small polypeptides family.

It localises to the cell membrane. Functionally, small polypeptide acting as a regulatory molecule which coordinates cellular responses required for differentiation, growth and development, probably by restricting polar cell proliferation in lateral organs (e.g. leaves and petioles). The polypeptide is Small polypeptide ROTUNDIFOLIA LIKE 3 (Oryza sativa subsp. indica (Rice)).